A 1088-amino-acid chain; its full sequence is RNA-directed RNA polymerase (1088 aa).

A RdRp catalytic domain is found at 501–687 (LSYGDVTRFL…AKRYIAGGKI (187 aa)).

It belongs to the reoviridae RNA-directed RNA polymerase family. Interacts with VP3 (Potential). Interacts with VP2; this interaction activates VP1. Interacts with NSP5; this interaction is probably necessary for the formation of functional virus factories. Interacts with NSP2; this interaction is weak. Requires Mg(2+) as cofactor.

The protein resides in the virion. The catalysed reaction is RNA(n) + a ribonucleoside 5'-triphosphate = RNA(n+1) + diphosphate. Its function is as follows. RNA-directed RNA polymerase that is involved in both transcription and genome replication. Together with VP3 capping enzyme, forms an enzyme complex positioned near the channels situated at each of the five-fold vertices of the core. Following infection, the outermost layer of the virus is lost, leaving a double-layered particle (DLP) made up of the core and VP6 shell. VP1 then catalyzes the transcription of fully conservative plus-strand genomic RNAs that are extruded through the DLP's channels into the cytoplasm where they function as mRNAs for translation of viral proteins. One copy of each of the viral (+)RNAs is also recruited during core assembly, together with newly synthesized polymerase complexes and VP2. The polymerase of these novo-formed particles catalyzes the synthesis of complementary minus-strands leading to dsRNA formation. To do so, the polymerase specifically recognizes and binds 4 bases 5'-UGUG-3' in the conserved 3'-sequence of plus-strand RNA templates. VP2 presumably activates the autoinhibited VP1-RNA complex to coordinate packaging and genome replication. Once dsRNA synthesis is complete, the polymerase switches to the transcriptional mode, thus providing secondary transcription. This chain is RNA-directed RNA polymerase, found in Rotavirus A (strain RVA/SA11-Both/G3P5B[2]) (RV-A).